Consider the following 101-residue polypeptide: Integration host factor subunit beta (101 aa).

The segment at 57 to 77 is disordered; sequence PARAGRNPRTGAHVPVDQKSV.

The protein belongs to the bacterial histone-like protein family. In terms of assembly, heterodimer of an alpha and a beta chain.

Its function is as follows. This protein is one of the two subunits of integration host factor, a specific DNA-binding protein that functions in genetic recombination as well as in transcriptional and translational control. The chain is Integration host factor subunit beta from Rhodopseudomonas palustris (strain HaA2).